We begin with the raw amino-acid sequence, 233 residues long: Leucyl/phenylalanyl-tRNA--protein transferase (233 aa).

Belongs to the L/F-transferase family.

The protein localises to the cytoplasm. It carries out the reaction N-terminal L-lysyl-[protein] + L-leucyl-tRNA(Leu) = N-terminal L-leucyl-L-lysyl-[protein] + tRNA(Leu) + H(+). The enzyme catalyses N-terminal L-arginyl-[protein] + L-leucyl-tRNA(Leu) = N-terminal L-leucyl-L-arginyl-[protein] + tRNA(Leu) + H(+). The catalysed reaction is L-phenylalanyl-tRNA(Phe) + an N-terminal L-alpha-aminoacyl-[protein] = an N-terminal L-phenylalanyl-L-alpha-aminoacyl-[protein] + tRNA(Phe). Functions in the N-end rule pathway of protein degradation where it conjugates Leu, Phe and, less efficiently, Met from aminoacyl-tRNAs to the N-termini of proteins containing an N-terminal arginine or lysine. The polypeptide is Leucyl/phenylalanyl-tRNA--protein transferase (Laribacter hongkongensis (strain HLHK9)).